Here is a 410-residue protein sequence, read N- to C-terminus: Cytochrome P450 105A3 (410 aa).

Cysteine 359 serves as a coordination point for heme.

The protein belongs to the cytochrome P450 family. In terms of assembly, monomer. Heme serves as cofactor.

In terms of biological role, catalyzes the hydroxylation of sodium ML-236B carboxylate to pravastatin. The protein is Cytochrome P450 105A3 (cyp105A3) of Streptomyces carbophilus.